The primary structure comprises 355 residues: Peptide chain release factor 1 (355 aa).

Q233 is subject to N5-methylglutamine. The segment covering 281–293 (RRNKEQERADSRR) has biased composition (basic and acidic residues). The segment at 281 to 308 (RRNKEQERADSRRGQIGSGDRSERIRTY) is disordered.

This sequence belongs to the prokaryotic/mitochondrial release factor family. Methylated by PrmC. Methylation increases the termination efficiency of RF1.

Its subcellular location is the cytoplasm. Peptide chain release factor 1 directs the termination of translation in response to the peptide chain termination codons UAG and UAA. In Rickettsia akari (strain Hartford), this protein is Peptide chain release factor 1.